The primary structure comprises 215 residues: Pyrrolidone-carboxylate peptidase (215 aa).

Residues Glu81, Cys144, and His168 contribute to the active site.

Belongs to the peptidase C15 family. As to quaternary structure, homotetramer.

It localises to the cytoplasm. The enzyme catalyses Release of an N-terminal pyroglutamyl group from a polypeptide, the second amino acid generally not being Pro.. Its function is as follows. Removes 5-oxoproline from various penultimate amino acid residues except L-proline. The sequence is that of Pyrrolidone-carboxylate peptidase from Bacillus velezensis (strain DSM 23117 / BGSC 10A6 / LMG 26770 / FZB42) (Bacillus amyloliquefaciens subsp. plantarum).